A 668-amino-acid chain; its full sequence is MKRVGDYILDKRIGWGAFAQVYKGFSIKTNEPFAIKVVDVCRLADKNSKLTENLNYEIRILKELSHTNIVRLYDVLNEETDPTFIYMIMECCEGGDFSKYIRTHKKLTEEKALYFMKQLANGLKFLRQKQIVHRDLKPQNLLLSDDSEHPILKIGDFGFAKFIDPFSLSDTFCGSPLYMAPEILHRKNYTVKADLWSVGIILYEMLVGEPAYNSGSVPDLLNQLQNKKIKLPSHISSDCQNLIYSLLQIDVEKRISWEDFFNHKWLNLNNNDSYKNNSGNYFNNNNINNNNNNNTNNNNNNISYPISINSNNTNNNNNNNNNNNNNNNNNNNNNNNNNNNNNNNNNNNYYNNNNSPPNVYHASSLPYDFNNNNNNNNSNNYNNNTNVPNSLPFAYNNNIYSSPTEAIPQPTTLNKSKSLENTGNTIRAHPFKDDKKSTTIQQPQQQQQQQQQQQQQQQQQQQQQQQQQQQNRQLSNLSTDFERDLVILDGEELESMERVFNRAVAIAELGDLRQNEPLECVPLYILALKLMKSKIPNDPSSSPDKFINTFTEYKRKLVHIFSTSNTSVKNQDHHSSFSPNRFIYENALEFGKKGAVEELYNNYPTSLQFYTDGTLLLEYLSSIVIDSDDQEIIKKYLNAFEVRTQICKKNYENSKNTVLNTNSIQNNT.

One can recognise a Protein kinase domain in the interval 7–266 (YILDKRIGWG…WEDFFNHKWL (260 aa)). ATP-binding positions include 13–21 (IGWGAFAQV) and K36. The active-site Proton acceptor is the D135. 2 stretches are compositionally biased toward low complexity: residues 281-354 (YFNN…NNNN) and 370-389 (NNNNNNNNSNNYNNNTNVPN). Disordered stretches follow at residues 281–389 (YFNN…NVPN) and 402–447 (SPTE…QQQQ). The segment covering 402 to 425 (SPTEAIPQPTTLNKSKSLENTGNT) has biased composition (polar residues).

This sequence belongs to the protein kinase superfamily. Ser/Thr protein kinase family. APG1/unc-51/ULK1 subfamily. As to quaternary structure, homodimer. Forms a ternary complex with ATG13 and ATG17.

Its subcellular location is the cytoplasm. It localises to the preautophagosomal structure membrane. It carries out the reaction L-seryl-[protein] + ATP = O-phospho-L-seryl-[protein] + ADP + H(+). It catalyses the reaction L-threonyl-[protein] + ATP = O-phospho-L-threonyl-[protein] + ADP + H(+). Its function is as follows. Serine/threonine protein kinase involved in autophagy. Involved in the control of autophagic vacuolar cell death. Required for normal survival when exposed to pathogenic bacteria S.typhimurium by promoting autophagic degradation of intracellular S.typhimurium. In Dictyostelium discoideum (Social amoeba), this protein is Serine/threonine-protein kinase atg1 (atg1).